We begin with the raw amino-acid sequence, 70 residues long: MLNPPLNQLTAKVNSKYLIATTAAKRARELDERRETALLDQYHSSKPVGKALEEIADGKIEPVVPKEYLG.

This sequence belongs to the RNA polymerase subunit omega family. As to quaternary structure, the RNAP catalytic core consists of 2 alpha, 1 beta, 1 beta' and 1 omega subunit. When a sigma factor is associated with the core the holoenzyme is formed, which can initiate transcription.

The catalysed reaction is RNA(n) + a ribonucleoside 5'-triphosphate = RNA(n+1) + diphosphate. Promotes RNA polymerase assembly. Latches the N- and C-terminal regions of the beta' subunit thereby facilitating its interaction with the beta and alpha subunits. The chain is DNA-directed RNA polymerase subunit omega from Staphylococcus epidermidis (strain ATCC 12228 / FDA PCI 1200).